The following is a 67-amino-acid chain: Phycobilisome 7.8 kDa linker polypeptide, allophycocyanin-associated, core (67 aa).

A CpcD-like domain is found at 1-56; the sequence is GRLFKITACVPSQTRIRTQRELQNTYFTKLVPYENWFREQQRIQKMGGKIVKVELA.

Belongs to the phycobilisome linker protein family.

Its subcellular location is the cellular thylakoid membrane. In terms of biological role, rod linker protein, associated with allophycocyanin. Linker polypeptides determine the state of aggregation and the location of the disk-shaped phycobiliprotein units within the phycobilisome and modulate their spectroscopic properties in order to mediate a directed and optimal energy transfer. This chain is Phycobilisome 7.8 kDa linker polypeptide, allophycocyanin-associated, core (apcC), found in Mastigocladus laminosus (Fischerella sp.).